The sequence spans 238 residues: CASP-like protein 2BC2 (238 aa).

Topologically, residues 1–66 are cytoplasmic; that stretch reads MPSSTYPRRR…FHQKVAVEKR (66 aa). The helical transmembrane segment at 67 to 87 threads the bilayer; it reads LKIGEVILRFAMIALALVAAV. At 88 to 111 the chain is on the extracellular side; sequence RVGTDTQTRTIFTIEKKAKYSDMK. The chain crosses the membrane as a helical span at residues 112 to 132; the sequence is ALVFLVVMNGIVASYSLLQGL. Topologically, residues 133–148 are cytoplasmic; the sequence is RCVLSIYTQSPLTSKP. Residues 149 to 169 form a helical membrane-spanning segment; that stretch reads LAWLIFALDQTMAYFSLAAAA. At 170 to 200 the chain is on the extracellular side; the sequence is AAAESAYLAERGQTEFQWMKVCIFYEKFCHQ. Residues 201–221 form a helical membrane-spanning segment; sequence IGEGLVSTFLVSLSMATVSGM. Over 222 to 238 the chain is Cytoplasmic; sequence SAYHLFRLYGSKGKSIQ.

Belongs to the Casparian strip membrane proteins (CASP) family. As to quaternary structure, homodimer and heterodimers.

Its subcellular location is the cell membrane. This chain is CASP-like protein 2BC2, found in Picea sitchensis (Sitka spruce).